The sequence spans 2051 residues: Fatty acid synthase subunit beta (2051 aa).

Met-1 is subject to N-acetylmethionine. Residues 1–468 are acetyltransferase; sequence MDAYSTRPLT…VYDTFDGSDL (468 aa). The active-site For acetyltransferase activity is the Ser-274. The interval 480 to 868 is enoyl reductase; sequence VDCIIRLPVK…TRGVMLWKEF (389 aa). At Thr-733 the chain carries Phosphothreonine. Ser-1121 bears the Phosphoserine mark. A dehydratase region spans residues 1144–1626; the sequence is GSEINWRHAS…LPNTALKTSI (483 aa). Lys-1364 participates in a covalent cross-link: Glycyl lysine isopeptide (Lys-Gly) (interchain with G-Cter in ubiquitin). One can recognise a MaoC-like domain in the interval 1523-1648; it reads NGSTLEQKVN…KFETRNEDDV (126 aa). The interval 1627–1845 is malonyl/palmitoyl transferase; the sequence is QHVGMINGRK…MTMQVAVPRD (219 aa). Catalysis depends on Ser-1808, which acts as the For malonyltransferase activity.

Belongs to the fungal fatty acid synthetase subunit beta family. In terms of assembly, [Alpha(6)beta(6)] hexamers of two multifunctional subunits (alpha and beta).

It carries out the reaction acetyl-CoA + n malonyl-CoA + 2n NADPH + 4n H(+) = a long-chain-acyl-CoA + n CoA + n CO2 + 2n NADP(+).. The catalysed reaction is holo-[ACP] + acetyl-CoA = acetyl-[ACP] + CoA. It catalyses the reaction holo-[ACP] + malonyl-CoA = malonyl-[ACP] + CoA. The enzyme catalyses a (3R)-hydroxyacyl-[ACP] = a (2E)-enoyl-[ACP] + H2O. It carries out the reaction a 2,3-saturated acyl-[ACP] + NAD(+) = a (2E)-enoyl-[ACP] + NADH + H(+). The catalysed reaction is (9Z)-octadecenoyl-[ACP] + H2O = (9Z)-octadecenoate + holo-[ACP] + H(+). Functionally, fatty acid synthetase catalyzes the formation of long-chain fatty acids from acetyl-CoA, malonyl-CoA and NADPH. The beta subunit contains domains for: [acyl-carrier-protein] acetyltransferase and malonyltransferase, S-acyl fatty acid synthase thioesterase, enoyl-[acyl-carrier-protein] reductase, and 3-hydroxypalmitoyl-[acyl-carrier-protein] dehydratase. In Saccharomyces cerevisiae (strain ATCC 204508 / S288c) (Baker's yeast), this protein is Fatty acid synthase subunit beta (FAS1).